A 213-amino-acid chain; its full sequence is 5-oxoprolinase subunit B (213 aa).

This sequence belongs to the PxpB family. Forms a complex composed of PxpA, PxpB and PxpC.

It carries out the reaction 5-oxo-L-proline + ATP + 2 H2O = L-glutamate + ADP + phosphate + H(+). Catalyzes the cleavage of 5-oxoproline to form L-glutamate coupled to the hydrolysis of ATP to ADP and inorganic phosphate. The sequence is that of 5-oxoprolinase subunit B from Haemophilus influenzae (strain ATCC 51907 / DSM 11121 / KW20 / Rd).